A 214-amino-acid chain; its full sequence is MTAVRAPRRRASGDVQGGFDFSRPDEIVCGVDEAGRGPLAGPVVAAAVILDPAQPIDGLDDSKVLSAKKRDALYDLIVTRSHAYCVASASVDEIDTLNILHATMLAMKRAVEGLSVLPTLAQIDGNRCPTLSVRAEAIVSGDALVPSISAASILAKVTRDRMLVDLHERFPVYGFNVHAGYGTAKHLAALREHGPCEAHRRSFAPVRAALDLIR.

The 189-residue stretch at 26-214 (EIVCGVDEAG…PVRAALDLIR (189 aa)) folds into the RNase H type-2 domain. A divalent metal cation-binding residues include aspartate 32, glutamate 33, and aspartate 124.

This sequence belongs to the RNase HII family. Mn(2+) is required as a cofactor. It depends on Mg(2+) as a cofactor.

It localises to the cytoplasm. It catalyses the reaction Endonucleolytic cleavage to 5'-phosphomonoester.. In terms of biological role, endonuclease that specifically degrades the RNA of RNA-DNA hybrids. The sequence is that of Ribonuclease HII from Burkholderia orbicola (strain MC0-3).